The following is a 397-amino-acid chain: L-asparaginase-like protein GM15681 (397 aa).

The first 22 residues, methionine 1–serine 22, serve as a signal peptide directing secretion. 3 disulfide bridges follow: cysteine 90–cysteine 95, cysteine 189–cysteine 205, and cysteine 344–cysteine 371.

This sequence belongs to the Ntn-hydrolase family.

The protein is L-asparaginase-like protein GM15681 of Drosophila sechellia (Fruit fly).